The following is a 575-amino-acid chain: Glutathione hydrolase proenzyme (575 aa).

An N-terminal signal peptide occupies residues 1–24; that stretch reads MKNQTFSKALLATALSCALFNVHA. Position 100 (Arg-100) interacts with L-glutamate. Residue Thr-376 is the Nucleophile of the active site. L-glutamate contacts are provided by residues Thr-394, Asn-396, Glu-415, Asp-418, 447-448, and 468-469; these read SS and GG.

It belongs to the gamma-glutamyltransferase family. In terms of assembly, this enzyme consists of two polypeptide chains, which are synthesized in precursor form from a single polypeptide. Post-translationally, cleaved by autocatalysis into a large and a small subunit.

The protein localises to the periplasm. It catalyses the reaction an N-terminal (5-L-glutamyl)-[peptide] + an alpha-amino acid = 5-L-glutamyl amino acid + an N-terminal L-alpha-aminoacyl-[peptide]. The catalysed reaction is glutathione + H2O = L-cysteinylglycine + L-glutamate. The enzyme catalyses an S-substituted glutathione + H2O = an S-substituted L-cysteinylglycine + L-glutamate. It functions in the pathway sulfur metabolism; glutathione metabolism. This Pseudomonas sp. (strain A14) protein is Glutathione hydrolase proenzyme (ggt).